The following is a 137-amino-acid chain: Phosphoribosyl-AMP cyclohydrolase (137 aa).

D84 serves as a coordination point for Mg(2+). Residue C85 participates in Zn(2+) binding. Mg(2+) is bound by residues D86 and D88. 2 residues coordinate Zn(2+): C101 and C108.

This sequence belongs to the PRA-CH family. As to quaternary structure, homodimer. Mg(2+) is required as a cofactor. It depends on Zn(2+) as a cofactor.

The protein localises to the cytoplasm. The enzyme catalyses 1-(5-phospho-beta-D-ribosyl)-5'-AMP + H2O = 1-(5-phospho-beta-D-ribosyl)-5-[(5-phospho-beta-D-ribosylamino)methylideneamino]imidazole-4-carboxamide. It participates in amino-acid biosynthesis; L-histidine biosynthesis; L-histidine from 5-phospho-alpha-D-ribose 1-diphosphate: step 3/9. Its function is as follows. Catalyzes the hydrolysis of the adenine ring of phosphoribosyl-AMP. The sequence is that of Phosphoribosyl-AMP cyclohydrolase from Chlorobium chlorochromatii (strain CaD3).